We begin with the raw amino-acid sequence, 542 residues long: CTP synthase (542 aa).

The segment at Met-1–Ile-265 is amidoligase domain. Ser-13 provides a ligand contact to CTP. A UTP-binding site is contributed by Ser-13. ATP-binding positions include Ser-14–Ile-19 and Asp-71. The Mg(2+) site is built by Asp-71 and Glu-139. CTP is bound by residues Asp-146–Glu-148, Lys-186–Gln-191, and Lys-222. Residues Lys-186–Gln-191 and Lys-222 each bind UTP. One can recognise a Glutamine amidotransferase type-1 domain in the interval Thr-291 to Leu-541. Gly-353 provides a ligand contact to L-glutamine. The Nucleophile; for glutamine hydrolysis role is filled by Cys-380. L-glutamine contacts are provided by residues Phe-381 to Gln-384, Glu-404, and Arg-469. Residues His-514 and Glu-516 contribute to the active site.

This sequence belongs to the CTP synthase family. Homotetramer.

It carries out the reaction UTP + L-glutamine + ATP + H2O = CTP + L-glutamate + ADP + phosphate + 2 H(+). It catalyses the reaction L-glutamine + H2O = L-glutamate + NH4(+). The enzyme catalyses UTP + NH4(+) + ATP = CTP + ADP + phosphate + 2 H(+). It functions in the pathway pyrimidine metabolism; CTP biosynthesis via de novo pathway; CTP from UDP: step 2/2. With respect to regulation, allosterically activated by GTP, when glutamine is the substrate; GTP has no effect on the reaction when ammonia is the substrate. The allosteric effector GTP functions by stabilizing the protein conformation that binds the tetrahedral intermediate(s) formed during glutamine hydrolysis. Inhibited by the product CTP, via allosteric rather than competitive inhibition. In terms of biological role, catalyzes the ATP-dependent amination of UTP to CTP with either L-glutamine or ammonia as the source of nitrogen. Regulates intracellular CTP levels through interactions with the four ribonucleotide triphosphates. The protein is CTP synthase of Rhizobium etli (strain ATCC 51251 / DSM 11541 / JCM 21823 / NBRC 15573 / CFN 42).